The following is a 413-amino-acid chain: Interferon-inducible GTPase 1 (413 aa).

The N-myristoyl glycine moiety is linked to residue Gly2. Positions 68–250 constitute an IRG-type G domain; it reads SVLNVAVTGE…PVLMDKLISD (183 aa). Residues Gly79, Gly81, Lys82, Ser83, Ser84, Thr102, and Gly103 each contribute to the GDP site. Thr102 is subject to (Microbial infection) Phosphothreonine; by ROP18. The residue at position 108 (Thr108) is a (Microbial infection) Phosphothreonine; by ROP18. GDP contacts are provided by Lys184, Asp186, Ser187, and Asn232. Cys236 and Cys410 form a disulfide bridge.

The protein belongs to the TRAFAC class dynamin-like GTPase superfamily. IRG family. In terms of assembly, monomer, as apoenzyme and in the GDP-bound form. Homooligomer, upon GTP binding. Interacts with HOOK3. As to quaternary structure, (Microbial infection) Interacts with Toxoplasma gondii GRA7 in GTP-dependent manner; the interaction results in faster turnover of the GTP-activated IIGP1 oligomer. Interacts with T.gondii ROP5; the interaction results in inhibition of IRGA6/IIGP1 GTPase activity and oligomerization. In terms of processing, myristoylated. (Microbial infection) Phosphorylated by Toxoplasma gondii ROP18 from virulent strains.

Its subcellular location is the cytoplasm. It localises to the nucleus membrane. The protein localises to the endoplasmic reticulum membrane. It is found in the golgi apparatus. The protein resides in the golgi stack membrane. Its subcellular location is the parasitophorous vacuole membrane. The enzyme catalyses GTP + H2O = GDP + phosphate + H(+). GTPase with low activity. Has higher affinity for GDP than for GTP. Plays a role in resistance to intracellular pathogens. During infection with avirulent Toxoplasma gondii strains, recruited to the parasitophorous vacuole membrane. Required for disruption of the parasitophorous vacuole formed following T.gondii infection and subsequent killing of the parasite. Mediates resistance to Chlamydia trachomatis infection by targeting bacterial inclusions to autophagosomes for subsequent lysosomal destruction. In Mus musculus (Mouse), this protein is Interferon-inducible GTPase 1 (Iigp1).